Here is a 674-residue protein sequence, read N- to C-terminus: Growth arrest-specific protein 6 (674 aa).

Residues 1–27 (MPPPPGPAAALGTALLLLLLASESSHT) form the signal peptide. Residues 50 to 91 (FEEAKQGHLERECVEEVCSKEEAREVFENDPETEYFYPRYQE) form the Gla domain. A disulfide bridge connects residues cysteine 62 and cysteine 67. Serine 68 is subject to Phosphoserine. One can recognise an EGF-like 1; calcium-binding domain in the interval 113-151 (LPDQCTPNPCDKKGTHICQDLMGNFFCVCTDGWGGRLCD). Cystine bridges form between cysteine 117/cysteine 130, cysteine 122/cysteine 139, cysteine 141/cysteine 150, cysteine 157/cysteine 168, cysteine 164/cysteine 177, cysteine 179/cysteine 192, cysteine 198/cysteine 209, cysteine 204/cysteine 218, cysteine 220/cysteine 233, cysteine 239/cysteine 248, cysteine 244/cysteine 257, cysteine 259/cysteine 274, cysteine 280/cysteine 566, and cysteine 441/cysteine 467. Residues 153–193 (DVNECVQKNGGCSQVCHNKPGSFQCACHSGFSLASDGQTCQ) form the EGF-like 2; calcium-binding domain. One can recognise an EGF-like 3; calcium-binding domain in the interval 194-234 (DIDECTDSDTCGDARCKNLPGSYSCLCDEGYTYSSKEKTCQ). Residues 235–275 (DVDECQQDRCEQTCVNSPGSYTCHCDGRGGLKLSPDMDTCE) form the EGF-like 4; calcium-binding domain. 2 consecutive Laminin G-like domains span residues 295–467 (GRMF…KMQC) and 474–666 (GSFF…SHSC). Positions 326 and 328 each coordinate Ca(2+). The N-linked (GlcNAc...) asparagine glycan is linked to asparagine 417. Arginine 437 is a Ca(2+) binding site. N-linked (GlcNAc...) asparagine glycosylation occurs at asparagine 488. Phosphothreonine is present on threonine 609. Serine 614 is subject to Phosphoserine. Threonine 617 and threonine 633 each carry phosphothreonine. Tyrosine 636 is modified (phosphotyrosine). Cysteine 639 and cysteine 666 are oxidised to a cystine. Aspartate 652 contacts Ca(2+).

In terms of assembly, heterodimer and heterotetramer with AXL. In terms of processing, gamma-carboxyglutamate residues are formed by vitamin K dependent carboxylation. These residues are essential for the binding of calcium.

The protein resides in the secreted. Functionally, ligand for tyrosine-protein kinase receptors AXL, TYRO3 and MER whose signaling is implicated in cell growth and survival, cell adhesion and cell migration. GAS6/AXL signaling plays a role in various processes such as endothelial cell survival during acidification by preventing apoptosis, optimal cytokine signaling during human natural killer cell development, hepatic regeneration, gonadotropin-releasing hormone neuron survival and migration, platelet activation, or regulation of thrombotic responses. This Mus musculus (Mouse) protein is Growth arrest-specific protein 6 (Gas6).